The sequence spans 237 residues: Beta-glucanase (237 aa).

Residues 1 to 23 (MKKKSCFTLVTTFAFSLIFSVSA) form the signal peptide. Residues 28–237 (VFWEPLSYFN…EYDWVKYTSN (210 aa)) enclose the GH16 domain. Cys-55 and Cys-84 are joined by a disulfide. Glu-128 functions as the Nucleophile in the catalytic mechanism. Glu-132 serves as the catalytic Proton donor.

It belongs to the glycosyl hydrolase 16 family.

The catalysed reaction is Hydrolysis of (1-&gt;4)-beta-D-glucosidic linkages in beta-D-glucans containing (1-&gt;3)- and (1-&gt;4)-bonds.. The chain is Beta-glucanase from Paenibacillus macerans (Bacillus macerans).